The sequence spans 565 residues: Periplasmic trehalase (565 aa).

The first 30 residues, Met-1–Ala-30, serve as a signal peptide directing secretion. Residues Arg-152, Trp-159 to Asp-160, Asn-196, Arg-205 to Gln-207, Arg-277 to Glu-279, and Gly-310 each bind substrate. Active-site proton donor/acceptor residues include Asp-312 and Glu-496. Glu-511 contributes to the substrate binding site. The segment at Pro-538–Pro-565 is disordered. The segment covering Thr-548–Pro-565 has biased composition (polar residues).

This sequence belongs to the glycosyl hydrolase 37 family. In terms of assembly, monomer.

It localises to the periplasm. It catalyses the reaction alpha,alpha-trehalose + H2O = alpha-D-glucose + beta-D-glucose. Functionally, provides the cells with the ability to utilize trehalose at high osmolarity by splitting it into glucose molecules that can subsequently be taken up by the phosphotransferase-mediated uptake system. In Escherichia coli (strain K12 / MC4100 / BW2952), this protein is Periplasmic trehalase.